The sequence spans 616 residues: MSSLAVRDPAMDRSLRSVFVGNIPYEATEEQLKDIFSEVGSVVSFRLVYDRETGKPKGYGFCEYQDQETALSAMRNLNGREFSGRALRVDNAASEKNKEELKSLGPAAPIIDSPYGDPIDPEDAPESITRAVASLPPEQMFELMKQMKLCVQNSHQEARNMLLQNPQLAYALLQAQVVMRIMDPEIALKILHRKIHVTPLIPGKSQSVSVSGPGPGPGPGLCPGPNVLLNQQNPPAPQPQHLARRPVKDIPPLMQTPIQGGIPAPGPIPAAVPGAGPGSLTPGGAMQPQLGMPGVGPVPLERGQVQMSDPRAPIPRGPVTPGGLPPRGLLGDAPNDPRGGTLLSVTGEVEPRGYLGPPHQGPPMHHASGHDTRGPSSHEMRGGPLGDPRLLIGEPRGPMIDQRGLPMDGRGGRDSRAMETRAMETEVLETRVMERRGMETCAMETRGMEARGMDARGLEMRGPVPSSRGPMTGGIQGPGPINIGAGGPPQGPRQVPGISGVGNPGAGMQGTGIQGTGMQGAGIQGGGMQGAGIQGVSIQGGGIQGGGIQGASKQGGSQPSSFSPGQSQVTPQDQEKAALIMQVLQLTADQIAMLPPEQRQSILILKEQIQKSTGAS.

The RRM domain maps to 16–94 (RSVFVGNIPY…RALRVDNAAS (79 aa)). Disordered stretches follow at residues 203-241 (GKSQSVSVSGPGPGPGPGLCPGPNVLLNQQNPPAPQPQH) and 262-418 (IPAP…SRAM). 2 stretches are compositionally biased toward low complexity: residues 223–233 (PGPNVLLNQQN) and 319–331 (VTPGGLPPRGLLG). Thr-320 carries the post-translational modification Phosphothreonine. The span at 368-381 (SGHDTRGPSSHEMR) shows a compositional bias: basic and acidic residues. One copy of the 1-1 repeat lies at 418–422 (METRA). The 9 X 5 AA tandem repeats of M-E-T-R-[AG] stretch occupies residues 418-462 (METRAMETEVLETRVMERRGMETCAMETRGMEARGMDARGLEMRG). Residues 423–427 (METEV) form a 1-2; approximate repeat. A 1-3; approximate repeat occupies 428–432 (LETRV). One copy of the 1-4; approximate repeat lies at 433 to 437 (MERRG). The 1-5; approximate repeat unit spans residues 438-442 (METCA). The 1-6 repeat unit spans residues 443–447 (METRG). A 1-7; approximate repeat occupies 448–452 (MEARG). A 1-8; approximate repeat occupies 453-457 (MDARG). One copy of the 1-9; approximate repeat lies at 458–462 (LEMRG). 4 consecutive repeat copies span residues 505 to 509 (GAGMQ), 510 to 514 (GTGIQ), 515 to 519 (GTGMQ), and 520 to 524 (GAGIQ). The segment at 505-549 (GAGMQGTGIQGTGMQGAGIQGGGMQGAGIQGVSIQGGGIQGGGIQ) is 9 X 5 AA tandem repeats of G-[AT]-G-[MI]-Q. A 2-5; approximate repeat occupies 525 to 529 (GGGMQ). Residues 530–534 (GAGIQ) form a 2-6 repeat. A 2-7; approximate repeat occupies 535–539 (GVSIQ). Residues 540 to 544 (GGGIQ) form a 2-8; approximate repeat. Residues 542–573 (GIQGGGIQGASKQGGSQPSSFSPGQSQVTPQD) form a disordered region. One copy of the 2-9; approximate repeat lies at 545–549 (GGGIQ). Residues 550–568 (GASKQGGSQPSSFSPGQSQ) show a composition bias toward low complexity. Ser-563 is subject to Phosphoserine.

It localises to the nucleus. May play a significant role in AAUAAA-independent mRNA polyadenylation in germ cells. Directly involved in the binding to pre-mRNAs. The protein is Cleavage stimulation factor subunit 2 tau variant (CSTF2T) of Homo sapiens (Human).